The following is a 190-amino-acid chain: GTP cyclohydrolase 1 (190 aa).

C75, H78, and C146 together coordinate Zn(2+).

It belongs to the GTP cyclohydrolase I family. As to quaternary structure, homomer.

It carries out the reaction GTP + H2O = 7,8-dihydroneopterin 3'-triphosphate + formate + H(+). It participates in cofactor biosynthesis; 7,8-dihydroneopterin triphosphate biosynthesis; 7,8-dihydroneopterin triphosphate from GTP: step 1/1. This chain is GTP cyclohydrolase 1, found in Campylobacter jejuni subsp. jejuni serotype O:6 (strain 81116 / NCTC 11828).